Consider the following 276-residue polypeptide: Large ribosomal subunit protein uL2 (276 aa).

Disordered regions lie at residues 26 to 45 (RSTPERSLTEGLTKKSGRNC) and 224 to 276 (AMNP…RGQK). Positions 259-276 (RDKKKASSKLIIKRRGQK) are enriched in basic residues.

The protein belongs to the universal ribosomal protein uL2 family. In terms of assembly, part of the 50S ribosomal subunit. Forms a bridge to the 30S subunit in the 70S ribosome.

One of the primary rRNA binding proteins. Required for association of the 30S and 50S subunits to form the 70S ribosome, for tRNA binding and peptide bond formation. It has been suggested to have peptidyltransferase activity; this is somewhat controversial. Makes several contacts with the 16S rRNA in the 70S ribosome. This chain is Large ribosomal subunit protein uL2, found in Oleidesulfovibrio alaskensis (strain ATCC BAA-1058 / DSM 17464 / G20) (Desulfovibrio alaskensis).